Here is a 319-residue protein sequence, read N- to C-terminus: Malate dehydrogenase (319 aa).

NAD(+)-binding positions include 10–15 and aspartate 34; that span reads GAGNIG. Substrate is bound by residues arginine 83 and arginine 89. Residues asparagine 96 and 119-121 contribute to the NAD(+) site; that span reads ITN. Substrate is bound by residues asparagine 121 and arginine 152. The active-site Proton acceptor is histidine 176.

Belongs to the LDH/MDH superfamily. MDH type 3 family.

It carries out the reaction (S)-malate + NAD(+) = oxaloacetate + NADH + H(+). Its function is as follows. Catalyzes the reversible oxidation of malate to oxaloacetate. The polypeptide is Malate dehydrogenase (Francisella novicida).